Here is a 237-residue protein sequence, read N- to C-terminus: MTPQAFYLVLEQAGFALTNHQKEQFDTYFKLLVDWNRKINLTAITEENEVYLKHFYDSVAPLLQGYIPNEPLRLLDIGAGAGFPSIPMKIMFPKLDVTIIDSLNKRIHFLQLLAKELGLEGVHFYHGRAEDFGQDKQFRGQFDLVTARAVARMQILSELTIPFLKIKGKLIALKAQAADQELEEAKKALQLLFAKVLDHQPYQLPNGDGRYITLVEKKKETPNKYPRKAGIPNKKPL.

S-adenosyl-L-methionine-binding positions include glycine 78, phenylalanine 83, 129-130 (AE), and arginine 148.

Belongs to the methyltransferase superfamily. RNA methyltransferase RsmG family.

It is found in the cytoplasm. Functionally, specifically methylates the N7 position of a guanine in 16S rRNA. In Streptococcus equi subsp. equi (strain 4047), this protein is Ribosomal RNA small subunit methyltransferase G.